A 411-amino-acid chain; its full sequence is Multifunctional CCA protein (411 aa).

Gly-8 and Arg-11 together coordinate ATP. 2 residues coordinate CTP: Gly-8 and Arg-11. Residues Glu-21 and Asp-23 each contribute to the Mg(2+) site. 3 residues coordinate ATP: Arg-91, Arg-137, and Arg-140. CTP is bound by residues Arg-91, Arg-137, and Arg-140. The region spanning 228 to 329 is the HD domain; it reads TGVHALLALE…LKTLLALDGL (102 aa).

This sequence belongs to the tRNA nucleotidyltransferase/poly(A) polymerase family. Bacterial CCA-adding enzyme type 1 subfamily. In terms of assembly, monomer. Can also form homodimers and oligomers. Mg(2+) serves as cofactor. Ni(2+) is required as a cofactor.

The catalysed reaction is a tRNA precursor + 2 CTP + ATP = a tRNA with a 3' CCA end + 3 diphosphate. It carries out the reaction a tRNA with a 3' CCA end + 2 CTP + ATP = a tRNA with a 3' CCACCA end + 3 diphosphate. In terms of biological role, catalyzes the addition and repair of the essential 3'-terminal CCA sequence in tRNAs without using a nucleic acid template. Adds these three nucleotides in the order of C, C, and A to the tRNA nucleotide-73, using CTP and ATP as substrates and producing inorganic pyrophosphate. tRNA 3'-terminal CCA addition is required both for tRNA processing and repair. Also involved in tRNA surveillance by mediating tandem CCA addition to generate a CCACCA at the 3' terminus of unstable tRNAs. While stable tRNAs receive only 3'-terminal CCA, unstable tRNAs are marked with CCACCA and rapidly degraded. This chain is Multifunctional CCA protein, found in Teredinibacter turnerae (strain ATCC 39867 / T7901).